Reading from the N-terminus, the 127-residue chain is Protein translocase subunit SecE (127 aa).

A run of 3 helical transmembrane segments spans residues 16–36, 41–61, and 96–116; these read AMKWIVVAILLIVAIVGNYLY, LPLRALAVVILIAAAGGVALL, and IVAAVTAVMSLILWGLDGILV.

Belongs to the SecE/SEC61-gamma family. Component of the Sec protein translocase complex. Heterotrimer consisting of SecY, SecE and SecG subunits. The heterotrimers can form oligomers, although 1 heterotrimer is thought to be able to translocate proteins. Interacts with the ribosome. Interacts with SecDF, and other proteins may be involved. Interacts with SecA.

The protein resides in the cell inner membrane. Essential subunit of the Sec protein translocation channel SecYEG. Clamps together the 2 halves of SecY. May contact the channel plug during translocation. This is Protein translocase subunit SecE from Salmonella typhi.